A 316-amino-acid polypeptide reads, in one-letter code: Pantothenate kinase (316 aa).

Residue Gly95–Ser102 participates in ATP binding.

This sequence belongs to the prokaryotic pantothenate kinase family.

The protein resides in the cytoplasm. The enzyme catalyses (R)-pantothenate + ATP = (R)-4'-phosphopantothenate + ADP + H(+). It participates in cofactor biosynthesis; coenzyme A biosynthesis; CoA from (R)-pantothenate: step 1/5. This is Pantothenate kinase from Shewanella oneidensis (strain ATCC 700550 / JCM 31522 / CIP 106686 / LMG 19005 / NCIMB 14063 / MR-1).